Here is a 615-residue protein sequence, read N- to C-terminus: Dehydrogenase str4 (615 aa).

FAD is bound by residues T45–A46, E66–A67, and N123–M126. The active-site Proton acceptor is the H552. FAD contacts are provided by residues A585 and P596–A597.

It belongs to the GMC oxidoreductase family. In terms of assembly, homodimer. It depends on FAD as a cofactor.

It participates in mycotoxin biosynthesis. Its function is as follows. Dehydrogenase; part of the gene cluster that mediates the biosynthesis of strobilurin A, an antifungal polyketide that contains a key beta-methoxyacrylate toxophore that targets the complex III of the mitochondrial electron transport chain. Strobilurin biosynthesis begins with construction of benzoyl CoA by step-wise elimination of ammonia from phenylalanine by the phenylalanine ammonia-lyase str11, oxygenation by str8 and retro-Claisen reaction to form benzoic acid, which is activated to its CoA thiolester benzoyl CoA by the dedicated CoA ligase str10. Benzoyl CoA forms the starter unit for the highly reducing polyketide synthase stpks1 that produces the polyketide prestrobilutin A. The FAD-dependent oxygenase str9 then catalyzes the key oxidative rearrangement responsible for the creation of the beta-methoxyacrylate toxophore. Str9 performs epoxidation of the 2,3 olefin of prestrobilutin A, followed by Meinwald rearrangement to furnish the aldehyde intermediate. Rapid enolization of the aldehyde intermediate would give the beta-methoxyacrylate skeleton and methylations catalyzed by str2 and str3 complete the synthesis and lead to the production of strobilurin A. The short-chain dehydrogenase stl2 and the dehydrogenase str4 play a role in the shunt pathway leading to the production of bolineol. The cluster encodes no obvious halogenase gene that could be involved in production of strobilurin B, nor any obvious dimethylallyl-transferase that could be involved in the production of strobilurin G. It is possible that unknown proteins encoded in, or near, the cluster (such as str1 or stl1) may form new classes of halogenases or dimethylally-transferases, or that the responsible genes are located elsewhere on the genome. Similarly, proteins encoded by str5/str6 hydrolases appear to have no chemical role in the biosynthesis of strobilurin A. Finally, no obvious self-resistance gene is found within the cluster. The chain is Dehydrogenase str4 from Strobilurus tenacellus.